The following is a 407-amino-acid chain: Multifunctional CCA protein (407 aa).

G8 and R11 together coordinate ATP. CTP contacts are provided by G8 and R11. Residues D21 and D23 each coordinate Mg(2+). Positions 91, 137, and 140 each coordinate ATP. CTP is bound by residues R91, R137, and R140. In terms of domain architecture, HD spans 228–329; it reads TGMHTLMVSQ…IKIFDKMDLW (102 aa).

The protein belongs to the tRNA nucleotidyltransferase/poly(A) polymerase family. Bacterial CCA-adding enzyme type 1 subfamily. Monomer. Can also form homodimers and oligomers. Requires Mg(2+) as cofactor. The cofactor is Ni(2+).

The catalysed reaction is a tRNA precursor + 2 CTP + ATP = a tRNA with a 3' CCA end + 3 diphosphate. It catalyses the reaction a tRNA with a 3' CCA end + 2 CTP + ATP = a tRNA with a 3' CCACCA end + 3 diphosphate. In terms of biological role, catalyzes the addition and repair of the essential 3'-terminal CCA sequence in tRNAs without using a nucleic acid template. Adds these three nucleotides in the order of C, C, and A to the tRNA nucleotide-73, using CTP and ATP as substrates and producing inorganic pyrophosphate. tRNA 3'-terminal CCA addition is required both for tRNA processing and repair. Also involved in tRNA surveillance by mediating tandem CCA addition to generate a CCACCA at the 3' terminus of unstable tRNAs. While stable tRNAs receive only 3'-terminal CCA, unstable tRNAs are marked with CCACCA and rapidly degraded. The protein is Multifunctional CCA protein of Aliivibrio salmonicida (strain LFI1238) (Vibrio salmonicida (strain LFI1238)).